Reading from the N-terminus, the 339-residue chain is MRRLSNKGEHQRNLNDRQRKVLYCIVKEYIENKKPVSSQRVLEVSNINFSSATIRNDMKKLEYLGYIYQPHTSAGRVPTDKGLRFYYEEMVKLSKETEELNLEVDTFRSIPLADPEKVLLLAGNLLARLAEGYVLIERPNPRDLKILRVMLIPVSEDYLIFSILTEFGISKITPIRIHEDLNWEEIERQLNFLLRGRTVEDVLTGKVETLRGSGILKLIESVMNEKLERYIDVGFENLLKDDTLSLEDIKHLLEEIKDHRFLESLIGNDKDVTVKIGKEIGSKKLERFAVFSGRYYKGSSPIGSVHLFTSKITRYDRNHRVFNYVLNRLSEYFTSAARR.

Belongs to the HrcA family.

In terms of biological role, negative regulator of class I heat shock genes (grpE-dnaK-dnaJ and groELS operons). Prevents heat-shock induction of these operons. This Thermotoga neapolitana (strain ATCC 49049 / DSM 4359 / NBRC 107923 / NS-E) protein is Heat-inducible transcription repressor HrcA.